The chain runs to 342 residues: Phosphoribosylformylglycinamidine cyclo-ligase (342 aa).

Belongs to the AIR synthase family.

Its subcellular location is the cytoplasm. The enzyme catalyses 2-formamido-N(1)-(5-O-phospho-beta-D-ribosyl)acetamidine + ATP = 5-amino-1-(5-phospho-beta-D-ribosyl)imidazole + ADP + phosphate + H(+). The protein operates within purine metabolism; IMP biosynthesis via de novo pathway; 5-amino-1-(5-phospho-D-ribosyl)imidazole from N(2)-formyl-N(1)-(5-phospho-D-ribosyl)glycinamide: step 2/2. The protein is Phosphoribosylformylglycinamidine cyclo-ligase of Latilactobacillus sakei subsp. sakei (strain 23K) (Lactobacillus sakei subsp. sakei).